The primary structure comprises 87 residues: Cell division topological specificity factor (87 aa).

Belongs to the MinE family.

Functionally, prevents the cell division inhibition by proteins MinC and MinD at internal division sites while permitting inhibition at polar sites. This ensures cell division at the proper site by restricting the formation of a division septum at the midpoint of the long axis of the cell. The chain is Cell division topological specificity factor from Clostridium botulinum (strain ATCC 19397 / Type A).